The sequence spans 279 residues: MAFQGPSRTLTQQSSAASSDDLQKILFSPDAIKKMATECDLGRHHWMRADNAISVRPLVPQVTSNNLLPFFKSGYDAGELRSKGYMSVPQVLCAVTRTVSTDAEGSLKIYLADLGDKELSPIDGQCVTLHNHELPALISFQPTYDCPMELVGNRHRCFAVVVERHGYIGYGGTTASVCSNWQAQFSSKNNNYTHAAAGKTLVLPYNRLAEHSKPSAVARLLKSQLNNVSSSRYLLPNVALNQNASGHESEILKESPPIAIGSPSASRNNSFRSQVVNGL.

The span at 256–266 (PPIAIGSPSAS) shows a compositional bias: low complexity. The segment at 256-279 (PPIAIGSPSASRNNSFRSQVVNGL) is disordered. Over residues 267–279 (RNNSFRSQVVNGL) the composition is skewed to polar residues.

It belongs to the cucumovirus movement protein family.

It is found in the host cell junction. The protein resides in the host plasmodesma. Its function is as follows. Transports viral genome to neighboring plant cells directly through plasmosdesmata, without any budding. The movement protein allows efficient cell to cell propagation, by bypassing the host cell wall barrier. Acts by forming a tubular structure at the host plasmodesmata, enlarging it enough to allow free passage of virion capsids. The sequence is that of Movement protein from Cucumis sativus (Cucumber).